Consider the following 112-residue polypeptide: Small ribosomal subunit protein bS6 (112 aa).

It belongs to the bacterial ribosomal protein bS6 family.

Its function is as follows. Binds together with bS18 to 16S ribosomal RNA. In Chlamydia felis (strain Fe/C-56) (Chlamydophila felis), this protein is Small ribosomal subunit protein bS6.